The primary structure comprises 980 residues: LRR receptor-like serine/threonine-protein kinase SIK1 (980 aa).

The signal sequence occupies residues 1-24 (MAAARAPWLWWWVVVVVGVAVAEA). Topologically, residues 25–588 (ASGGGGGGDG…HGQRVNISKT (564 aa)) are extracellular. 2 N-linked (GlcNAc...) asparagine glycosylation sites follow: asparagine 72 and asparagine 81. 20 LRR repeats span residues 75–98 (FAVL…IGEL), 99–122 (KNLQ…IGDC), 124–146 (SLKY…ISKL), 147–170 (KQLE…LSQI), 171–194 (PNLK…IYWN), 196–218 (VLQY…MCQL), 219–242 (TGLW…IGNC), 243–265 (TSFE…NIGF), 266–289 (LQVA…IGLM), 290–312 (QALA…ILGN), 314–337 (SYTG…LGNM), 338–361 (SKLS…LGKL), 362–385 (EELF…ISSC), 387–408 (ALNK…GFQK), 409–433 (LESL…LGHI), 435–457 (NLDT…IGDL), 458–480 (EHLL…EFGN), 481–505 (LRSV…LGQL), 507–529 (NLDS…LANC), and 531–554 (SLNN…NFSK). N-linked (GlcNAc...) asparagine glycosylation is found at asparagine 230 and asparagine 241. Residues asparagine 312 and asparagine 336 are each glycosylated (N-linked (GlcNAc...) asparagine). Residues asparagine 381, asparagine 399, and asparagine 416 are each glycosylated (N-linked (GlcNAc...) asparagine). Residues asparagine 464 and asparagine 493 are each glycosylated (N-linked (GlcNAc...) asparagine). N-linked (GlcNAc...) asparagine glycans are attached at residues asparagine 536, asparagine 541, asparagine 551, and asparagine 584. Residues 589-609 (AIACIILGFIILLCVLLLAIY) form a helical membrane-spanning segment. Topologically, residues 610 to 980 (KTNQPQPLVK…FGEVISKHTM (371 aa)) are cytoplasmic. Residues 653–923 (LSEKYIIGYG…EVARVLLSLL (271 aa)) enclose the Protein kinase domain. ATP contacts are provided by residues 659-667 (IGYGASSTV) and lysine 681. Catalysis depends on aspartate 778, which acts as the Proton acceptor.

It belongs to the protein kinase superfamily. Ser/Thr protein kinase family. In terms of processing, autophosphorylated. In terms of tissue distribution, expressed in nodes, vascular bundles of stems, and anthers.

It is found in the cell membrane. The enzyme catalyses L-seryl-[protein] + ATP = O-phospho-L-seryl-[protein] + ADP + H(+). The catalysed reaction is L-threonyl-[protein] + ATP = O-phospho-L-threonyl-[protein] + ADP + H(+). In terms of biological role, receptor kinase involved in salt drought stress responses. Acts as a positive regulator of salt and drought tolerance. May promote salt and drought tolerance through the induction of the activities of antioxidative enzymes, such as peroxidase, superoxide dismutase and catalase. May be involved in the control of stomatal development in leaf epidermis. Possesses kinase activity in vitro. Does not seem to be involved in heat tolerance. This is LRR receptor-like serine/threonine-protein kinase SIK1 from Oryza sativa subsp. japonica (Rice).